Here is a 422-residue protein sequence, read N- to C-terminus: Protein phosphatase 1 regulatory subunit 36 (422 aa).

In terms of assembly, interacts with PPP1CA.

Functionally, inhibits phosphatase activity of protein phosphatase 1 (PP1) complexes. The chain is Protein phosphatase 1 regulatory subunit 36 (PPP1R36) from Homo sapiens (Human).